The chain runs to 344 residues: Molybdate/tungstate import ATP-binding protein WtpC (344 aa).

The region spanning 2–231 (LRVESVSKDY…PVDEGVARFL (230 aa)) is the ABC transporter domain. ATP is bound at residue 33–40 (GPSGAGKT). Positions 280–344 (KTSARNEFRA…SFKTSAIKVF (65 aa)) constitute a Mop domain.

The protein belongs to the ABC transporter superfamily. Sulfate/tungstate importer (TC 3.A.1.6) family. As to quaternary structure, the complex is composed of two ATP-binding proteins (WtpC), two transmembrane proteins (WtpB) and a solute-binding protein (WtpA).

The protein localises to the cell membrane. It carries out the reaction tungstate(in) + ATP + H2O = tungstate(out) + ADP + phosphate + H(+). Functionally, part of the ABC transporter complex WtpABC involved in molybdate/tungstate import. Responsible for energy coupling to the transport system. The protein is Molybdate/tungstate import ATP-binding protein WtpC (wtpC) of Pyrococcus abyssi (strain GE5 / Orsay).